Consider the following 224-residue polypeptide: Thiamine-phosphate synthase (224 aa).

4-amino-2-methyl-5-(diphosphooxymethyl)pyrimidine-binding positions include Gln-44–Lys-48 and Asn-79. Mg(2+)-binding residues include Asp-80 and Asp-99. Residue Ser-117 coordinates 4-amino-2-methyl-5-(diphosphooxymethyl)pyrimidine. Thr-143–Thr-145 contributes to the 2-[(2R,5Z)-2-carboxy-4-methylthiazol-5(2H)-ylidene]ethyl phosphate binding site. Lys-146 contributes to the 4-amino-2-methyl-5-(diphosphooxymethyl)pyrimidine binding site. 2-[(2R,5Z)-2-carboxy-4-methylthiazol-5(2H)-ylidene]ethyl phosphate contacts are provided by residues Gly-175 and Ile-195–Ser-196.

It belongs to the thiamine-phosphate synthase family. Mg(2+) is required as a cofactor.

The enzyme catalyses 2-[(2R,5Z)-2-carboxy-4-methylthiazol-5(2H)-ylidene]ethyl phosphate + 4-amino-2-methyl-5-(diphosphooxymethyl)pyrimidine + 2 H(+) = thiamine phosphate + CO2 + diphosphate. It carries out the reaction 2-(2-carboxy-4-methylthiazol-5-yl)ethyl phosphate + 4-amino-2-methyl-5-(diphosphooxymethyl)pyrimidine + 2 H(+) = thiamine phosphate + CO2 + diphosphate. The catalysed reaction is 4-methyl-5-(2-phosphooxyethyl)-thiazole + 4-amino-2-methyl-5-(diphosphooxymethyl)pyrimidine + H(+) = thiamine phosphate + diphosphate. The protein operates within cofactor biosynthesis; thiamine diphosphate biosynthesis; thiamine phosphate from 4-amino-2-methyl-5-diphosphomethylpyrimidine and 4-methyl-5-(2-phosphoethyl)-thiazole: step 1/1. Its function is as follows. Condenses 4-methyl-5-(beta-hydroxyethyl)thiazole monophosphate (THZ-P) and 2-methyl-4-amino-5-hydroxymethyl pyrimidine pyrophosphate (HMP-PP) to form thiamine monophosphate (TMP). The polypeptide is Thiamine-phosphate synthase (Bacillus cereus (strain ATCC 10987 / NRS 248)).